Here is a 480-residue protein sequence, read N- to C-terminus: Protein nucleotidyltransferase YdiU (480 aa).

8 residues coordinate ATP: Gly-84, Gly-86, Arg-87, Lys-107, Asp-119, Gly-120, Arg-170, and Arg-177. Asp-246 serves as the catalytic Proton acceptor. Mg(2+) contacts are provided by Asn-247 and Asp-256. Asp-256 is a binding site for ATP.

It belongs to the SELO family. The cofactor is Mg(2+). It depends on Mn(2+) as a cofactor.

The catalysed reaction is L-seryl-[protein] + ATP = 3-O-(5'-adenylyl)-L-seryl-[protein] + diphosphate. It catalyses the reaction L-threonyl-[protein] + ATP = 3-O-(5'-adenylyl)-L-threonyl-[protein] + diphosphate. The enzyme catalyses L-tyrosyl-[protein] + ATP = O-(5'-adenylyl)-L-tyrosyl-[protein] + diphosphate. It carries out the reaction L-histidyl-[protein] + UTP = N(tele)-(5'-uridylyl)-L-histidyl-[protein] + diphosphate. The catalysed reaction is L-seryl-[protein] + UTP = O-(5'-uridylyl)-L-seryl-[protein] + diphosphate. It catalyses the reaction L-tyrosyl-[protein] + UTP = O-(5'-uridylyl)-L-tyrosyl-[protein] + diphosphate. In terms of biological role, nucleotidyltransferase involved in the post-translational modification of proteins. It can catalyze the addition of adenosine monophosphate (AMP) or uridine monophosphate (UMP) to a protein, resulting in modifications known as AMPylation and UMPylation. The protein is Protein nucleotidyltransferase YdiU of Pseudoalteromonas atlantica (strain T6c / ATCC BAA-1087).